The chain runs to 307 residues: Acyl transferase (307 aa).

Active-site charge relay system residues include Ser-116, Asp-213, and His-243.

Belongs to the LuxD family.

The protein operates within lipid metabolism; fatty acid reduction for biolumincescence. Functionally, acyl transferase is part of the fatty acid reductase system required for aldehyde biosynthesis; it produces fatty acids for the luminescent reaction. In Photorhabdus laumondii subsp. laumondii (strain DSM 15139 / CIP 105565 / TT01) (Photorhabdus luminescens subsp. laumondii), this protein is Acyl transferase.